We begin with the raw amino-acid sequence, 314 residues long: MAFLHNGNHTAVTEFILLGLTDDPVFRVILFTIILCIYLVTVSGNLSTILLIRVSSQLHHPMYFFLSHLASVDIGYSSSVTPNMLANFLVEKNTISYLGCTIQLSLAAFCGTVECFLLATMAYDRFMAICSPLLYSTKMSTQVCIQLIVGSYIGGFLNASSFTLFFLSFLFCGPNRINHFYCDFAPLVALSCSDVSVSEVVTSFFSGSVTMITMLVIAISYTYILITILKMRSTEGRHKAFSTCTSHLTAVTLFYGTITFIYVMPKSSFSTDQNKVVSVFYMVVIPMLNPLIYSLRNNEIKDALKRHLGKKIFS.

Residues 1–28 (MAFLHNGNHTAVTEFILLGLTDDPVFRV) lie on the Extracellular side of the membrane. N-linked (GlcNAc...) asparagine glycosylation is present at Asn8. Residues 29–49 (ILFTIILCIYLVTVSGNLSTI) traverse the membrane as a helical segment. At 50 to 57 (LLIRVSSQ) the chain is on the cytoplasmic side. A helical transmembrane segment spans residues 58 to 78 (LHHPMYFFLSHLASVDIGYSS). Topologically, residues 79–102 (SVTPNMLANFLVEKNTISYLGCTI) are extracellular. Cys100 and Cys192 form a disulfide bridge. A helical membrane pass occupies residues 103–123 (QLSLAAFCGTVECFLLATMAY). The Cytoplasmic portion of the chain corresponds to 124–136 (DRFMAICSPLLYS). Residues 137 to 157 (TKMSTQVCIQLIVGSYIGGFL) form a helical membrane-spanning segment. Residues 158–199 (NASSFTLFFLSFLFCGPNRINHFYCDFAPLVALSCSDVSVSE) are Extracellular-facing. The helical transmembrane segment at 200–220 (VVTSFFSGSVTMITMLVIAIS) threads the bilayer. At 221-240 (YTYILITILKMRSTEGRHKA) the chain is on the cytoplasmic side. A helical membrane pass occupies residues 241–261 (FSTCTSHLTAVTLFYGTITFI). Residues 262–274 (YVMPKSSFSTDQN) lie on the Extracellular side of the membrane. Residues 275–295 (KVVSVFYMVVIPMLNPLIYSL) traverse the membrane as a helical segment. The Cytoplasmic portion of the chain corresponds to 296-314 (RNNEIKDALKRHLGKKIFS).

The protein belongs to the G-protein coupled receptor 1 family.

It is found in the cell membrane. Functionally, potential odorant receptor. The sequence is that of Olfactory receptor 5P68 from Mus musculus (Mouse).